The following is a 263-amino-acid chain: Interleukin-33 (263 aa).

Positions 1–17 (MKYSTTKIPPAKMNSSA) are enriched in polar residues. Residues 1–28 (MKYSTTKIPPAKMNSSADKALVKSPKLR) form a disordered region. The homeodomain-like HTH domain stretch occupies residues 1–65 (MKYSTTKIPP…CYFRKEITKR (65 aa)). The tract at residues 62–103 (ITKRYSPRTAEKCRKQCLVFTACHQQLNKDFTSDVPMLQKCF) is interaction with RELA.

This sequence belongs to the IL-1 family. Highly divergent. Forms a 1:1:1 heterotrimeric complex with its primary high-affinity receptor IL1RL1 and the coreceptor IL1RAP. Interacts with cargo receptor TMED10; the interaction mediates the translocation from the cytoplasm into the ERGIC (endoplasmic reticulum-Golgi intermediate compartment) and thereby secretion. Post-translationally, the full-length protein can be released from cells and is able to signal via the IL1RL1/ST2 receptor. However, proteolytic processing by CELA1, CSTG/cathepsin G and ELANE/neutrophil elastase produces C-terminal peptides that are more active than the unprocessed full-length protein. May also be proteolytically processed by calpains. Proteolytic cleavage mediated by apoptotic caspases including CASP3 and CASP7 results in IL33 inactivation. In vitro proteolytic cleavage by CASP1 was reported but could not be confirmed in vivo suggesting that IL33 is probably not a direct substrate for that caspase. As to expression, expressed in cultured umbilical artery smooth muscle cells after stimulation with IL1A and IL1B, and to a lesser extent with IFNG. Expressed in vasospastic cerebral arteries after subarachnoid hemorrhage.

The protein resides in the nucleus. Its subcellular location is the chromosome. It is found in the cytoplasm. The protein localises to the cytoplasmic vesicle. It localises to the secretory vesicle. The protein resides in the secreted. Cytokine that binds to and signals through the IL1RL1/ST2 receptor which in turn activates NF-kappa-B and MAPK signaling pathways in target cells. Involved in the maturation of Th2 cells inducing the secretion of T-helper type 2-associated cytokines. Also involved in activation of mast cells, basophils, eosinophils and natural killer cells. Acts as a chemoattractant for Th2 cells, and may function as an 'alarmin', that amplifies immune responses during tissue injury. Induces rapid UCP2-dependent mitochondrial rewiring that attenuates the generation of reactive oxygen species and preserves the integrity of Krebs cycle required for persistent production of itaconate and subsequent GATA3-dependent differentiation of inflammation-resolving alternatively activated macrophages. In terms of biological role, in quiescent endothelia the uncleaved form is constitutively and abundantly expressed, and acts as a chromatin-associated nuclear factor with transcriptional repressor properties, it may sequester nuclear NF-kappaB/RELA, lowering expression of its targets. This form is rapidely lost upon angiogenic or pro-inflammatory activation. The chain is Interleukin-33 (IL33) from Canis lupus familiaris (Dog).